Consider the following 1430-residue polypeptide: Nephrocystin-4 (1430 aa).

Residues methionine 824–glutamate 1430 are sufficient for basal bodies localization. The segment at asparagine 828–arginine 857 is disordered.

Belongs to the NPHP4 family.

It localises to the cytoplasm. The protein resides in the cytoskeleton. Its subcellular location is the cilium basal body. Involved in the organization of apical junctions. Required for building functional cilia. Involved in the organization of the subapical actin network in multiciliated epithelial cells. Seems to recruit int to basal bodies of motile cilia which subsequently interacts with actin-modifying proteins such as daam1. May down-regulate the canonical Wnt pathway and promote the Wnt-PCP pathway. Acts as a negative regulator of the hippo pathway. The chain is Nephrocystin-4 (nphp4) from Xenopus laevis (African clawed frog).